The primary structure comprises 124 residues: Small ribosomal subunit protein bS6 (124 aa).

Residues 97 to 124 form a disordered region; the sequence is TGPSPMMKEVQREEAKKAAAAQPTEAQA. Positions 114 to 124 are enriched in low complexity; it reads AAAAQPTEAQA.

Belongs to the bacterial ribosomal protein bS6 family.

In terms of biological role, binds together with bS18 to 16S ribosomal RNA. In Paraburkholderia phymatum (strain DSM 17167 / CIP 108236 / LMG 21445 / STM815) (Burkholderia phymatum), this protein is Small ribosomal subunit protein bS6.